The chain runs to 264 residues: Regulatory protein RecX (264 aa).

It belongs to the RecX family.

It localises to the cytoplasm. Modulates RecA activity. This is Regulatory protein RecX from Lacticaseibacillus casei (strain BL23) (Lactobacillus casei).